We begin with the raw amino-acid sequence, 535 residues long: Succinate-semialdehyde dehydrogenase, mitochondrial (535 aa).

Residues 1–47 (MATCIWLRSCGARRLGWTFPGCRLRPRAGGLVPASGPAPGPAQLRCY) constitute a mitochondrion transit peptide. Lys126 carries the post-translational modification N6-acetyllysine; alternate. Position 126 is an N6-succinyllysine; alternate (Lys126). An N6-succinyllysine mark is found at Lys135 and Lys184. NAD(+) is bound by residues Arg213 and 228 to 231 (KPAE). Arg213 contacts substrate. The residue at position 265 (Lys265) is an N6-acetyllysine; alternate. The residue at position 265 (Lys265) is an N6-succinyllysine; alternate. 284 to 289 (GSTTTG) serves as a coordination point for NAD(+). Catalysis depends on Glu306, which acts as the Proton acceptor. Position 334 (Arg334) interacts with substrate. Cys340 acts as the Nucleophile in catalysis. Cys340 and Cys342 form a disulfide bridge. Lys365 carries the N6-acetyllysine modification. At Lys402 the chain carries N6-succinyllysine. The residue at position 411 (Lys411) is an N6-acetyllysine. Ser498 lines the substrate pocket. Ser499 is modified (phosphoserine).

The protein belongs to the aldehyde dehydrogenase family. Homotetramer.

It localises to the mitochondrion. The enzyme catalyses succinate semialdehyde + NAD(+) + H2O = succinate + NADH + 2 H(+). It participates in amino-acid degradation; 4-aminobutanoate degradation. Redox-regulated. Inhibited under oxydizing conditions. Functionally, catalyzes one step in the degradation of the inhibitory neurotransmitter gamma-aminobutyric acid (GABA). The chain is Succinate-semialdehyde dehydrogenase, mitochondrial (ALDH5A1) from Pan paniscus (Pygmy chimpanzee).